Reading from the N-terminus, the 339-residue chain is Phenylalanine--tRNA ligase alpha subunit (339 aa).

E253 contacts Mg(2+).

It belongs to the class-II aminoacyl-tRNA synthetase family. Phe-tRNA synthetase alpha subunit type 1 subfamily. As to quaternary structure, tetramer of two alpha and two beta subunits. Mg(2+) serves as cofactor.

The protein resides in the cytoplasm. The enzyme catalyses tRNA(Phe) + L-phenylalanine + ATP = L-phenylalanyl-tRNA(Phe) + AMP + diphosphate + H(+). The polypeptide is Phenylalanine--tRNA ligase alpha subunit (Ruthia magnifica subsp. Calyptogena magnifica).